A 295-amino-acid polypeptide reads, in one-letter code: Hepatic leukemia factor (295 aa).

Basic and acidic residues predominate over residues E37–D52. Disordered stretches follow at residues E37 to W70 and S93 to D167. The 64-residue stretch at D225–Y288 folds into the bZIP domain. The basic motif stretch occupies residues K227–R247. Residues L248–I255 are leucine-zipper.

It belongs to the bZIP family. PAR subfamily. In terms of assembly, binds DNA specifically as homodimer or heterodimer with other PAR factors. In terms of tissue distribution, highly expressed in liver; lower levels in lung and kidney.

The protein localises to the nucleus. This chain is Hepatic leukemia factor (HLF), found in Homo sapiens (Human).